Reading from the N-terminus, the 434-residue chain is RNA-binding protein SRO9 (434 aa).

Over residues Met1–Ala13 the composition is skewed to low complexity. The interval Met1–Gln243 is disordered. Residues Ser26 to Pro41 show a composition bias toward polar residues. Phosphoserine is present on Ser55. A compositionally biased stretch (low complexity) spans Lys93 to Ala124. Positions Asn125–Gln140 are enriched in basic residues. A Phosphoserine modification is found at Ser148. Lys156 is covalently cross-linked (Glycyl lysine isopeptide (Lys-Gly) (interchain with G-Cter in ubiquitin)). A compositionally biased stretch (polar residues) spans Ala158–Thr167. A compositionally biased stretch (basic residues) spans Pro173 to His195. Residues Asn196–Phe208 are compositionally biased toward polar residues. The span at Arg218 to Arg227 shows a compositional bias: low complexity. The span at Ser228–Gln238 shows a compositional bias: basic residues. In terms of domain architecture, HTH La-type RNA-binding spans Val255 to Ala351. Glycyl lysine isopeptide (Lys-Gly) (interchain with G-Cter in ubiquitin) cross-links involve residues Lys301, Lys342, and Lys352. The segment at Ser396–Leu434 is disordered. Residue Ser422 is modified to Phosphoserine.

As to quaternary structure, interacts with HAP1. Component of the HMC including HAP1, SRO9 and YDJ1.

It is found in the cytoplasm. Functionally, may overlap in function with tropomyosin and may be involved in organization of actin filaments. Acts as a multicopy suppressor of RHO3 mutation. RNA-binding protein which may modulate mRNA translation. Involved in heme regulation of HAP1, as a component of the high-molecular-weight complex (HMC). This is RNA-binding protein SRO9 (SRO9) from Saccharomyces cerevisiae (strain ATCC 204508 / S288c) (Baker's yeast).